Here is a 69-residue protein sequence, read N- to C-terminus: Large ribosomal subunit protein bL31 (69 aa).

4 residues coordinate Zn(2+): Cys16, Cys18, Cys37, and Cys40.

Belongs to the bacterial ribosomal protein bL31 family. Type A subfamily. In terms of assembly, part of the 50S ribosomal subunit. The cofactor is Zn(2+).

In terms of biological role, binds the 23S rRNA. This Buchnera aphidicola subsp. Cinara cedri (strain Cc) protein is Large ribosomal subunit protein bL31.